The chain runs to 260 residues: Thiazole synthase (260 aa).

K96 serves as the catalytic Schiff-base intermediate with DXP. Residues G157, 184–185 (AG), and 206–207 (NT) each bind 1-deoxy-D-xylulose 5-phosphate.

This sequence belongs to the ThiG family. As to quaternary structure, homotetramer. Forms heterodimers with either ThiH or ThiS.

Its subcellular location is the cytoplasm. The catalysed reaction is [ThiS sulfur-carrier protein]-C-terminal-Gly-aminoethanethioate + 2-iminoacetate + 1-deoxy-D-xylulose 5-phosphate = [ThiS sulfur-carrier protein]-C-terminal Gly-Gly + 2-[(2R,5Z)-2-carboxy-4-methylthiazol-5(2H)-ylidene]ethyl phosphate + 2 H2O + H(+). It functions in the pathway cofactor biosynthesis; thiamine diphosphate biosynthesis. Catalyzes the rearrangement of 1-deoxy-D-xylulose 5-phosphate (DXP) to produce the thiazole phosphate moiety of thiamine. Sulfur is provided by the thiocarboxylate moiety of the carrier protein ThiS. In vitro, sulfur can be provided by H(2)S. The chain is Thiazole synthase from Bradyrhizobium sp. (strain ORS 278).